We begin with the raw amino-acid sequence, 249 residues long: ATP-dependent dethiobiotin synthetase BioD (249 aa).

11–16 (NVGKTI) lines the ATP pocket. Residue Thr-15 coordinates Mg(2+). Residue Lys-31 is part of the active site. A substrate-binding site is contributed by Thr-35. ATP-binding positions include Asp-40, 127–130 (EGAG), 188–189 (NS), and 215–217 (PYL). Asp-40 and Glu-127 together coordinate Mg(2+).

It belongs to the dethiobiotin synthetase family. As to quaternary structure, homodimer. Mg(2+) serves as cofactor.

The protein resides in the cytoplasm. It carries out the reaction (7R,8S)-7,8-diammoniononanoate + CO2 + ATP = (4R,5S)-dethiobiotin + ADP + phosphate + 3 H(+). Its pathway is cofactor biosynthesis; biotin biosynthesis; biotin from 7,8-diaminononanoate: step 1/2. In terms of biological role, catalyzes a mechanistically unusual reaction, the ATP-dependent insertion of CO2 between the N7 and N8 nitrogen atoms of 7,8-diaminopelargonic acid (DAPA, also called 7,8-diammoniononanoate) to form a ureido ring. The sequence is that of ATP-dependent dethiobiotin synthetase BioD from Neorickettsia sennetsu (strain ATCC VR-367 / Miyayama) (Ehrlichia sennetsu).